The primary structure comprises 157 residues: uncharacterized protein (157 aa).

This is an uncharacterized protein from Rickettsia prowazekii (strain Madrid E).